The sequence spans 77 residues: ATP synthase subunit c (77 aa).

Transmembrane regions (helical) follow at residues 7–27 and 57–77; these read AFKY…AALG and VGLI…ILFL.

This sequence belongs to the ATPase C chain family. In terms of assembly, F-type ATPases have 2 components, F(1) - the catalytic core - and F(0) - the membrane proton channel. F(1) has five subunits: alpha(3), beta(3), gamma(1), delta(1), epsilon(1). F(0) has three main subunits: a(1), b(2) and c(10-14). The alpha and beta chains form an alternating ring which encloses part of the gamma chain. F(1) is attached to F(0) by a central stalk formed by the gamma and epsilon chains, while a peripheral stalk is formed by the delta and b chains.

Its subcellular location is the cell membrane. Functionally, f(1)F(0) ATP synthase produces ATP from ADP in the presence of a proton or sodium gradient. F-type ATPases consist of two structural domains, F(1) containing the extramembraneous catalytic core and F(0) containing the membrane proton channel, linked together by a central stalk and a peripheral stalk. During catalysis, ATP synthesis in the catalytic domain of F(1) is coupled via a rotary mechanism of the central stalk subunits to proton translocation. In terms of biological role, key component of the F(0) channel; it plays a direct role in translocation across the membrane. A homomeric c-ring of between 10-14 subunits forms the central stalk rotor element with the F(1) delta and epsilon subunits. The protein is ATP synthase subunit c of Lactobacillus helveticus (strain DPC 4571).